The sequence spans 313 residues: Nematocyst expressed protein 8 (313 aa).

A signal peptide spans 1–19 (MLRRPLLLVLFTVFSTLYA). The interval 24–56 (GVSPPTNESEAEVSPGDDEGPPEPGNEPDVNWR) is disordered. Residues 32 to 44 (SEAEVSPGDDEGP) show a composition bias toward acidic residues. 3 consecutive ShKT domains span residues 65–99 (CKDK…CRFC), 109–145 (CKDL…CELC), and 151–186 (FKYT…CRKY). Intrachain disulfides connect Cys65-Cys99, Cys72-Cys92, Cys81-Cys96, Cys109-Cys145, Cys127-Cys142, Cys160-Cys179, and Cys169-Cys183. Residues 222-244 (TAAPSTQPAETTKAPPNTAAPTA) are compositionally biased toward low complexity. A disordered region spans residues 222 to 313 (TAAPSTQPAE…LCDEKHSSQQ (92 aa)). The span at 245 to 265 (APTPAPTPAPAPAPTPAPVAP) shows a compositional bias: pro residues. A compositionally biased stretch (acidic residues) spans 280-297 (TPEEQDDNSADESTEIEA).

Belongs to the NEP3 family. Nematocytes. In late planulae, is only expressed in a handful of nematocytes in the lower pharynx. Is absent from the tentacles and outer body wall.

The protein resides in the nematocyst. The protein localises to the secreted. Probable toxin probably only used for predation. In Nematostella vectensis (Starlet sea anemone), this protein is Nematocyst expressed protein 8.